The chain runs to 460 residues: DL-alanine permease SerP2 (460 aa).

A run of 12 helical transmembrane segments spans residues 26 to 46 (LIAI…KSIH), 47 to 67 (LTGP…YILL), 98 to 118 (FIQW…LIAI), 124 to 144 (FWLP…LLTL), 160 to 180 (FGMI…ILIF), 209 to 229 (FFES…IGMT), 246 to 266 (QIPI…MSIY), 278 to 298 (FVTI…NFVV), 344 to 364 (ALLF…IPAI), 368 to 388 (FVFI…MTLI), 410 to 430 (HIFI…LFCF), and 433 to 453 (TIIP…FTFF).

It belongs to the amino acid-polyamine-organocation (APC) superfamily. Amino acid transporter (AAT) (TC 2.A.3.1) family.

The protein localises to the cell membrane. Transports DL-alanine, DL-serine and glycine. The preferred substrate is DL-alanine. L-serine is a low-affinity substrate. This chain is DL-alanine permease SerP2, found in Lactococcus lactis subsp. cremoris (strain MG1363).